Reading from the N-terminus, the 123-residue chain is Galanin peptides (123 aa).

A signal peptide spans 1–19 (MPRGSVLLLASLLLAAALS). The propeptide occupies 20–30 (ATLGLGSPVKE). Positions 53–66 (SFQDKHGLAGKREL) are enriched in basic and acidic residues. The interval 53-79 (SFQDKHGLAGKRELEPEDEARPGSFDR) is disordered. Residue Ala61 is modified to Alanine amide. Ser116 is modified (phosphoserine).

This sequence belongs to the galanin family.

It is found in the secreted. Endocrine hormone of the central and peripheral nervous systems that binds and activates the G protein-coupled receptors GALR1, GALR2, and GALR3. This small neuropeptide may regulate diverse physiologic functions including contraction of smooth muscle of the gastrointestinal and genitourinary tract, growth hormone and insulin release and adrenal secretion. In Bos taurus (Bovine), this protein is Galanin peptides (GAL).